A 104-amino-acid polypeptide reads, in one-letter code: MAANSSGQGFQNKNRVAILAELDKEKRKLLMQNQSSTNHPGASIALSRPSLNKDFRDHAEQQHIAAQQKAALQHAHAHSSGYFITQDSAFGNLILPVLPRLDPE.

N-acetylalanine is present on alanine 2. Residue serine 50 is modified to Phosphoserine.

The protein belongs to the SOSS-C family. Component of the SOSS complex, composed of SOSS-B (SOSS-B1/NABP2 or SOSS-B2/NABP1), SOSS-A/INTS3 and SOSS-C/INIP. SOSS complexes containing SOSS-B1/NABP2 are more abundant than complexes containing SOSS-B2/NABP1. Interacts with INTS3; the interaction is direct.

It localises to the nucleus. Functionally, component of the SOSS complex, a multiprotein complex that functions downstream of the MRN complex to promote DNA repair and G2/M checkpoint. The SOSS complex associates with single-stranded DNA at DNA lesions and influences diverse endpoints in the cellular DNA damage response including cell-cycle checkpoint activation, recombinational repair and maintenance of genomic stability. Required for efficient homologous recombination-dependent repair of double-strand breaks (DSBs) and ATM-dependent signaling pathways. The polypeptide is SOSS complex subunit C (INIP) (Homo sapiens (Human)).